The following is a 217-amino-acid chain: MSATNKQNAASVFGRPWIFIRGVPSMKFLPPEGPTEIAFAGRSNVGKSSLINALVGHKGLARTSNTPGRTQELNYFVPDGYSGEAGDLPPMALVDMPGYGYAQAPKEQVDAWTKLVFDYLRGRSTLKRVYVLIDARHGIKKNDEDVLALLDKAAVSYQIVLTKTDKIKAAGVPRLVAETLEKIKKRPAAFPEVLSTSSEKGEGIEDLRAAIELAVTR.

Residues 33–217 (GPTEIAFAGR…RAAIELAVTR (185 aa)) enclose the EngB-type G domain. GTP contacts are provided by residues 41 to 48 (GRSNVGKS), 68 to 72 (GRTQE), 95 to 98 (DMPG), 162 to 165 (TKTD), and 196 to 198 (TSS). Residues Ser48 and Thr70 each contribute to the Mg(2+) site.

It belongs to the TRAFAC class TrmE-Era-EngA-EngB-Septin-like GTPase superfamily. EngB GTPase family. It depends on Mg(2+) as a cofactor.

In terms of biological role, necessary for normal cell division and for the maintenance of normal septation. The polypeptide is Probable GTP-binding protein EngB (Rhizobium meliloti (strain 1021) (Ensifer meliloti)).